A 132-amino-acid chain; its full sequence is Fatty acid-binding protein type 2 (132 aa).

An N-acetylalanine modification is found at Ala-2.

Belongs to the calycin superfamily. Fatty-acid binding protein (FABP) family.

This is Fatty acid-binding protein type 2 from Fasciola hepatica (Liver fluke).